A 399-amino-acid chain; its full sequence is Elongation factor Tu (399 aa).

The tr-type G domain maps to 10-204 (KPHVNIGTIG…AVDASIPEPE (195 aa)). The interval 19–26 (GHVDHGKT) is G1. A GTP-binding site is contributed by 19–26 (GHVDHGKT). Mg(2+) is bound at residue Thr26. The tract at residues 60–64 (GITIN) is G2. The interval 81 to 84 (DCPG) is G3. Residues 81–85 (DCPGH) and 136–139 (NKCD) contribute to the GTP site. Residues 136-139 (NKCD) form a G4 region. The G5 stretch occupies residues 174–176 (SGL).

Belongs to the TRAFAC class translation factor GTPase superfamily. Classic translation factor GTPase family. EF-Tu/EF-1A subfamily. In terms of assembly, monomer.

The protein localises to the cytoplasm. It catalyses the reaction GTP + H2O = GDP + phosphate + H(+). GTP hydrolase that promotes the GTP-dependent binding of aminoacyl-tRNA to the A-site of ribosomes during protein biosynthesis. In Prochlorococcus marinus (strain MIT 9215), this protein is Elongation factor Tu.